Consider the following 379-residue polypeptide: Citrate utilization protein B (379 aa).

Residues C28, C31, C34, C38, C62, C65, C68, and C72 each coordinate [4Fe-4S] cluster.

The sequence is that of Citrate utilization protein B (citB) from Escherichia coli.